Reading from the N-terminus, the 557-residue chain is Glutamyl-tRNA(Gln) amidotransferase subunit B, mitochondrial (557 aa).

A mitochondrion-targeting transit peptide spans 1 to 41; the sequence is MAAPMLRWGCRGRRWAFARVDGGSCHRRGAPTGSTSNQIRG. The disordered stretch occupies residues 26 to 45; that stretch reads HRRGAPTGSTSNQIRGESSV. Residues 32–45 show a composition bias toward polar residues; it reads TGSTSNQIRGESSV. Lys529 bears the N6-succinyllysine mark.

This sequence belongs to the GatB/GatE family. GatB subfamily. Subunit of the heterotrimeric GatCAB amidotransferase (AdT) complex, composed of A (QRSL1), B (GATB) and C (GATC) subunits. As to expression, predominantly expressed in tissues characterized by high rates of oxidative phosphorylation (OxPhos), including muscle and heart.

It is found in the mitochondrion. The enzyme catalyses L-glutamyl-tRNA(Gln) + L-glutamine + ATP + H2O = L-glutaminyl-tRNA(Gln) + L-glutamate + ADP + phosphate + H(+). In terms of biological role, allows the formation of correctly charged Gln-tRNA(Gln) through the transamidation of misacylated Glu-tRNA(Gln) in the mitochondria. The reaction takes place in the presence of glutamine and ATP through an activated gamma-phospho-Glu-tRNA(Gln). The sequence is that of Glutamyl-tRNA(Gln) amidotransferase subunit B, mitochondrial from Homo sapiens (Human).